A 280-amino-acid chain; its full sequence is UPF0750 membrane protein YitT (280 aa).

The next 4 helical transmembrane spans lie at 9–29 (LLIV…FLIP), 54–74 (FYIS…ILGW), 80–100 (SFTV…GILP), and 151–171 (VGTY…LLQG).

Belongs to the UPF0750 family.

Its subcellular location is the cell membrane. The protein is UPF0750 membrane protein YitT (yitT) of Bacillus subtilis (strain 168).